The following is a 410-amino-acid chain: Peptidase T (410 aa).

Histidine 78 lines the Zn(2+) pocket. Residue aspartate 80 is part of the active site. Residue aspartate 140 coordinates Zn(2+). Glutamate 174 functions as the Proton acceptor in the catalytic mechanism. Glutamate 175, aspartate 197, and histidine 379 together coordinate Zn(2+).

The protein belongs to the peptidase M20B family. Zn(2+) is required as a cofactor.

The protein localises to the cytoplasm. The catalysed reaction is Release of the N-terminal residue from a tripeptide.. In terms of biological role, cleaves the N-terminal amino acid of tripeptides. In Vibrio atlanticus (strain LGP32) (Vibrio splendidus (strain Mel32)), this protein is Peptidase T.